A 116-amino-acid polypeptide reads, in one-letter code: G antigen 2A (116 aa).

A disordered region spans residues 1–116; that stretch reads MSWRGRSTYR…PEEGEKQSQC (116 aa). 2 stretches are compositionally biased toward acidic residues: residues 31 to 44 and 86 to 95; these read FSDE…EEGE and ECEDGPDGQE. Over residues 102 to 116 the composition is skewed to basic and acidic residues; sequence EEVKTPEEGEKQSQC.

This sequence belongs to the GAGE family.

The polypeptide is G antigen 2A (GAGE2A) (Homo sapiens (Human)).